Consider the following 1107-residue polypeptide: Rho GTPase-activating protein 39 (1107 aa).

The disordered stretch occupies residues 1-21; it reads MSQAQDYECRSHHVDEQEPRI. An N-acetylserine modification is found at Ser-2. Residues 7–19 show a composition bias toward basic and acidic residues; the sequence is YECRSHHVDEQEP. WW domains follow at residues 25-58 and 63-97; these read STRL…PPAG and RTSE…RPQN. Residues 111–122 show a composition bias toward polar residues; the sequence is QNTESPRASADN. 4 disordered regions span residues 111 to 173, 218 to 267, 282 to 311, and 326 to 370; these read QNTE…PPGV, PSFL…PERR, SPLL…LYEE, and MDVQ…LMRT. The span at 123-136 shows a compositional bias: low complexity; the sequence is SPGRGSRDGSTGSS. A compositionally biased stretch (polar residues) spans 242–254; sequence SGSQHSPNLQTFV. Phosphoserine is present on Ser-282. Composition is skewed to polar residues over residues 331-343 and 353-369; these read EANS…SPQR and LQTT…QLMR. Phosphoserine occurs at positions 380, 384, 402, and 403. Disordered stretches follow at residues 404 to 429, 441 to 529, and 563 to 585; these read PKLR…QPSP, SGDY…RASL, and MKQR…GAVP. The span at 470-484 shows a compositional bias: polar residues; the sequence is SWSSQQDTMSSTGYS. 4 positions are modified to phosphoserine: Ser-597, Ser-683, Ser-708, and Ser-719. One can recognise a MyTH4 domain in the interval 715–867; the sequence is WSSESIKKPM…PYVEEPDGVA (153 aa). Residues 914-1102 form the Rho-GAP domain; it reads SALQEVMSMQ…VLIQHLDTSF (189 aa).

The protein localises to the nucleus. The polypeptide is Rho GTPase-activating protein 39 (Arhgap39) (Mus musculus (Mouse)).